The following is a 1078-amino-acid chain: A type blood alpha-D-galactosamine galactosaminidase (1078 aa).

The N-terminal stretch at methionine 1–alanine 26 is a signal peptide. The tract at residues proline 306–glycine 570 is glycoside hydrolase 36 domain. Catalysis depends on aspartate 463, which acts as the Nucleophile. Aspartate 532 is an active-site residue. The not required for activity on soluble substrates stretch occupies residues proline 699 to alanine 1078.

It belongs to the glycosyl hydrolase 36 family.

The catalysed reaction is an alpha-D-galactosaminyl-(1-&gt;3)-[alpha-L-fucosyl-(1-&gt;2)]-beta-D-galactosyl derivative + H2O = D-galactosamine + an alpha-L-fucosyl-(1-&gt;2)-beta-D-galactosyl derivative. Its function is as follows. One of an enzyme pair that work together to convert the A antigen to the H antigen of the O blood type, which together release galactosamine. Catalyzes the second step in the conversion, acts on the product of the first reaction (FpGalNAcDeAc, AC P0DTR4). Is specific for galactosamine containing sugars, does not cleave GalNAc residues. In Flavonifractor plautii (Fusobacterium plautii), this protein is A type blood alpha-D-galactosamine galactosaminidase.